The sequence spans 335 residues: Dihydroorotate dehydrogenase (quinone) (335 aa).

Residues 58–62 and Thr-82 contribute to the FMN site; that span reads AGADK. Substrate is bound at residue Lys-62. 107–111 lines the substrate pocket; that stretch reads NRNGF. 2 residues coordinate FMN: Asn-135 and Asn-168. Position 168 (Asn-168) interacts with substrate. Ser-171 functions as the Nucleophile in the catalytic mechanism. Asn-173 lines the substrate pocket. Lys-213 and Gly-241 together coordinate FMN. 242–243 provides a ligand contact to substrate; that stretch reads NT. FMN is bound by residues Gly-264, Gly-293, and 314–315; that span reads YS.

It belongs to the dihydroorotate dehydrogenase family. Type 2 subfamily. As to quaternary structure, monomer. The cofactor is FMN.

It is found in the cell membrane. The catalysed reaction is (S)-dihydroorotate + a quinone = orotate + a quinol. Its pathway is pyrimidine metabolism; UMP biosynthesis via de novo pathway; orotate from (S)-dihydroorotate (quinone route): step 1/1. In terms of biological role, catalyzes the conversion of dihydroorotate to orotate with quinone as electron acceptor. In Haemophilus ducreyi (strain 35000HP / ATCC 700724), this protein is Dihydroorotate dehydrogenase (quinone).